We begin with the raw amino-acid sequence, 397 residues long: Elongation factor Tu (397 aa).

The tr-type G domain occupies 10-207; sequence LPHVNVGTIG…TLDSYIPEPV (198 aa). The segment at 19 to 26 is G1; that stretch reads GHVDHGKT. 19–26 contributes to the GTP binding site; it reads GHVDHGKT. Residue T26 participates in Mg(2+) binding. A G2 region spans residues 60–64; it reads GITIN. A G3 region spans residues 81–84; that stretch reads DCPG. Residues 81-85 and 136-139 each bind GTP; these read DCPGH and NKAD. The interval 136–139 is G4; it reads NKAD. A G5 region spans residues 174-176; sequence SAR.

Belongs to the TRAFAC class translation factor GTPase superfamily. Classic translation factor GTPase family. EF-Tu/EF-1A subfamily. As to quaternary structure, monomer.

Its subcellular location is the cytoplasm. It catalyses the reaction GTP + H2O = GDP + phosphate + H(+). GTP hydrolase that promotes the GTP-dependent binding of aminoacyl-tRNA to the A-site of ribosomes during protein biosynthesis. The sequence is that of Elongation factor Tu from Pseudomonas putida (strain ATCC 700007 / DSM 6899 / JCM 31910 / BCRC 17059 / LMG 24140 / F1).